A 711-amino-acid polypeptide reads, in one-letter code: Tyrosine-protein phosphatase 2 (711 aa).

In terms of domain architecture, Rhodanese spans 21-130 (TESVSWIIDL…FASSHPDAIV (110 aa)). Disordered regions lie at residues 275 to 306 (APQQ…SRVR) and 329 to 376 (IIPR…RANK). Polar residues-rich tracts occupy residues 290 to 306 (SYPS…SRVR) and 340 to 363 (NAQN…SNTR). The Tyrosine-protein phosphatase domain maps to 433–698 (EMTRSLAFND…KFLYDVVDYL (266 aa)). Cys-630 functions as the Phosphocysteine intermediate in the catalytic mechanism.

Belongs to the protein-tyrosine phosphatase family. Non-receptor class subfamily.

The protein localises to the cytoplasm. The enzyme catalyses O-phospho-L-tyrosyl-[protein] + H2O = L-tyrosyl-[protein] + phosphate. Functionally, plays a role in inhibiting the onset of mitosis. Dephosphorylates sty1/spc1 and wis1/spc2/sty2. This is Tyrosine-protein phosphatase 2 (pyp2) from Schizosaccharomyces pombe (strain 972 / ATCC 24843) (Fission yeast).